The primary structure comprises 1183 residues: MPITHVALSPSPIPAPTSCASPWIVIPTTIPPLNSSQFPTIPLSTILLPASGAPHPLWEAFANQPSLRAENGIKFPIQLTATTPIALTSVVVGFFSTGEEGLFDEETIEEMITKGLDDMRVVHTGDIVRVQWMSVLARVRLCEPVDQGVITEDTKVIVVKESRGKKTGEPEDGPLANGIDLNGVDDSDSDEDVLSQGDDDDENNVDLPGVSTFMDIATTLGTPSISTPLRNGPGASISGLSDAPKVVKFTAKPLSQKIPTTLLLPTPPAADDAEARVYVRVNELMGLGCFSGDWIGVASDHGLFGDRLPNGSRAWRPAKVYSLPELYAGKEKVKVLMKGCVYMSPLLHANLGSPSSVVLTKSPFMNPSNIQQGALLSPVTTAPPSSATPQIPPTAKEVTLLRISTPISTDRALQPSLLAGLKTYFETSRKMVKVGDLIPVLIDESLGRNLFSPAALLPPDAENAEEIPGAGDELLYGSHGGAGIGVNNTGKLCAAWFRVGTIAPTDEATNAFSNGMTSQQWGGVAIVDPGSTRMVQAGSERGRIPPTLNSPWEYYLNIVPPPIPNNPPPIHPALELPNNYISPVHRRLRELISAATSLRSIKLGLAPLAVLLTSTQRSIGKRLLAYRAASDVGVHIFHIDAYDIIGEGGQASDVKTEAYLRARSERAASCGIENCVLLISHIEAFTAERMAEALRDIVADMRIVIATTTDVDKVPEPVRNVFTHELEVGAPDEGERTGLLRQITQERGVRLAKEIDLSTIALKTAALVAGDLVDVVERAMTACSERMEGLAAEMEGVTVRDIQLAGGDASCLNKQDFEAAVDAARKNFADSIGAPKIPNVSWDDVGGLANVKSAVMETIQLPLERPELFAKGMKKRSGILFYGPPGTGKTLLAKAIATEFSLNFFSVKGPELLNMYIGESEANVRRVFQRARDARPCVVFFDELDSVAPKRGNQGDSGGVMDRIVSQLLAELDGMSEGKEGSGGVFVIGATNRPDLLDPALLRPGRFDKMLFLGVSDTHHKQLTILEALTRKFTLHNSLSLAKISETLPFTYTGADLYALCSDAMLKAITRQASKVDQKIKEMENPVSTAYFFDYLATPDDVAVAVTEDDFMEAKKELIGSVSQKELEHYDRVRQMFETVDEKKGDATVDKKGKGRAIEIMVDGPGTGGEGAFGDDGDEEGLY.

The segment at 161 to 205 (ESRGKKTGEPEDGPLANGIDLNGVDDSDSDEDVLSQGDDDDENNV) is disordered. Residues 183-204 (GVDDSDSDEDVLSQGDDDDENN) are compositionally biased toward acidic residues. Positions 576-785 (LPNNYISPVH…VERAMTACSE (210 aa)) are AAA-cassette D1. The AAA-cassette D2 stretch occupies residues 878–1070 (GILFYGPPGT…CSDAMLKAIT (193 aa)). 883–890 (GPPGTGKT) is an ATP binding site. The tract at residues 1160 to 1183 (IMVDGPGTGGEGAFGDDGDEEGLY) is disordered. Positions 1173-1183 (FGDDGDEEGLY) are enriched in acidic residues.

It belongs to the AAA ATPase family. As to quaternary structure, interacts with PEX1; forming the PEX1-PEX6 AAA ATPase complex, which is composed of a heterohexamer formed by a trimer of PEX1-PEX6 dimers.

The protein localises to the cytoplasm. Its subcellular location is the cytosol. It localises to the peroxisome membrane. The enzyme catalyses ATP + H2O = ADP + phosphate + H(+). Its function is as follows. Component of the PEX1-PEX6 AAA ATPase complex, a protein dislocase complex that mediates the ATP-dependent extraction of the PEX5 receptor from peroxisomal membranes, an essential step for PEX5 recycling. Specifically recognizes PEX5 monoubiquitinated at 'Cys-6', and pulls it out of the peroxisome lumen through the PEX2-PEX10-PEX12 retrotranslocation channel. Extraction by the PEX1-PEX6 AAA ATPase complex is accompanied by unfolding of the TPR repeats and release of bound cargo from PEX5. Regulates autophagy and biogenesis of peroxisomes and Woronin bodies. Plays important roles in mycelial growth and development and stress response. Is also essential for conidiation and fatty acid utilization. Required for nematode predation via trap formation. This is Peroxisomal ATPase PEX6 from Arthrobotrys oligospora (strain ATCC 24927 / CBS 115.81 / DSM 1491) (Nematode-trapping fungus).